The sequence spans 315 residues: Zinc finger protein 691 (315 aa).

Positions 1-10 (MSLCSPTHSA) are enriched in polar residues. A disordered region spans residues 1 to 90 (MSLCSPTHSA…QETHPKKPWQ (90 aa)). A compositionally biased stretch (basic and acidic residues) spans 33–58 (GSEKEQSPEPHLPEEGEGGKPWRVDD). 3 positions are modified to phosphoserine: serine 39, serine 75, and serine 77. A Glycyl lysine isopeptide (Lys-Gly) (interchain with G-Cter in SUMO2) cross-link involves residue lysine 113. C2H2-type zinc fingers lie at residues 115–137 (FICA…QRIH), 143–165 (YKCS…ERIH), 171–193 (YKCP…QQDH), 199–221 (YRCD…HRTH), 227–249 (YICC…HRTH), 255–277 (YECT…QRTH), and 283–305 (YRCT…QKTH).

Belongs to the krueppel C2H2-type zinc-finger protein family.

The protein resides in the nucleus. In terms of biological role, may be involved in transcriptional regulation. The sequence is that of Zinc finger protein 691 (ZNF691) from Homo sapiens (Human).